The sequence spans 99 residues: Prostate and testis expressed protein 14 (99 aa).

An N-terminal signal peptide occupies residues 1-21 (MGKNILLLLLGLSFVIGFLQA). The region spanning 22-99 (LRCLECDMLN…CHDQSLCNEF (78 aa)) is the UPAR/Ly6 domain. Disulfide bonds link C24/C51, C27/C36, C43/C69, C73/C89, and C90/C96. A glycan (N-linked (GlcNAc...) asparagine) is linked at N40. N75 and N82 each carry an N-linked (GlcNAc...) asparagine glycan.

Belongs to the PATE family. Monomer.

It is found in the secreted. This Rattus norvegicus (Rat) protein is Prostate and testis expressed protein 14.